Consider the following 141-residue polypeptide: MNARGLGSELKDSIPVAELSASGPFESHDLLRKGFSCVKNELLPSHPLELSEKNFQLNQDKMNFSTLRNIQGLFAPLKLQMEFKAVQQVHRLPFLPSSNLSLDILRGNDETIGFEDILNDPSQSELMGEPHVMVEHKLGLL.

K39 is covalently cross-linked (Glycyl lysine isopeptide (Lys-Gly) (interchain with G-Cter in SUMO2)).

The protein belongs to the POMP/UMP1 family. As to quaternary structure, constituent of preproteasomes, but not of mature 20S proteasomes. Within the preproteasome, may directly interact with PSMB1/beta6, PSMB4/beta7, PSMB5/beta5, PSMB6/beta1 and PSMB9/beta1i. Interaction with PSMB8/beta5i is controversial. Forms tetramers. As to expression, widely expressed.

The protein resides in the cytoplasm. Its subcellular location is the cytosol. It is found in the nucleus. It localises to the microsome membrane. Functionally, molecular chaperone essential for the assembly of standard proteasomes and immunoproteasomes. Degraded after completion of proteasome maturation. Mediates the association of 20S preproteasome with the endoplasmic reticulum. The sequence is that of Proteasome maturation protein (Pomp) from Mus musculus (Mouse).